The following is a 129-amino-acid chain: uncharacterized protein (129 aa).

Belongs to the asfivirus C129R family.

It is found in the virion. Plays a role in the inhibition of type I interferon signaling pathway. Mechanistically, specifically interacts with 2',3'-cGAMP and cleaves it via its phosphodiesterase activity. In turn, prevents 2',3'-cGAMP interaction with host ER-resident STING1 leading to inhibition of downstream signaling pathway and type I interferon production. This is an uncharacterized protein from Ornithodoros (relapsing fever ticks).